A 163-amino-acid chain; its full sequence is uncharacterized protein (163 aa).

Transmembrane regions (helical) follow at residues 7 to 27 (YLNE…CYIV) and 51 to 71 (LVIF…LVWF).

The protein localises to the cell membrane. This is an uncharacterized protein from Rickettsia prowazekii (strain Madrid E).